A 466-amino-acid polypeptide reads, in one-letter code: Chromosomal replication initiator protein DnaA (466 aa).

A domain I, interacts with DnaA modulators region spans residues 1 to 86 (MSLSLWQQCL…EVGTKPVTQT (86 aa)). Positions 86–129 (TLKTPVHNVVAPTQTTTAQPQRVAPAARSGWDNVPAPAEPTYRS) are domain II. Positions 130–346 (NVNVKHTFDN…GALNRVIANA (217 aa)) are domain III, AAA+ region. The ATP site is built by glycine 174, glycine 176, lysine 177, and threonine 178. The segment at 347–466 (NFTGRAITID…FSNLIRTLSS (120 aa)) is domain IV, binds dsDNA.

Belongs to the DnaA family. As to quaternary structure, oligomerizes as a right-handed, spiral filament on DNA at oriC.

Its subcellular location is the cytoplasm. In terms of biological role, plays an essential role in the initiation and regulation of chromosomal replication. ATP-DnaA binds to the origin of replication (oriC) to initiate formation of the DNA replication initiation complex once per cell cycle. Binds the DnaA box (a 9 base pair repeat at the origin) and separates the double-stranded (ds)DNA. Forms a right-handed helical filament on oriC DNA; dsDNA binds to the exterior of the filament while single-stranded (ss)DNA is stabiized in the filament's interior. The ATP-DnaA-oriC complex binds and stabilizes one strand of the AT-rich DNA unwinding element (DUE), permitting loading of DNA polymerase. After initiation quickly degrades to an ADP-DnaA complex that is not apt for DNA replication. Binds acidic phospholipids. This Salmonella enteritidis PT4 (strain P125109) protein is Chromosomal replication initiator protein DnaA.